The chain runs to 435 residues: Mitochondrial association factor 1 form b0 (435 aa).

Residues 1–27 (MWRIWRCRLSFLFVTGCLLGALTAGLG) form the signal peptide. Residues 28–96 (SQMSDSVGRN…VTARRRRNRR (69 aa)) lie on the Vacuolar side of the membrane. Positions 43-89 (GVADASQEAGDVVEERTERTEEQVFAPGPPRRHSSESLFPRNPSVTA) are disordered. A compositionally biased stretch (basic and acidic residues) spans 55 to 64 (VEERTERTEE). A helical membrane pass occupies residues 97–117 (ITLIATAVGVAVILAALYVLR). Residues 118-435 (RRRAQPPQEP…ESTYLASMLD (318 aa)) lie on the Cytoplasmic side of the membrane. The interval 120–162 (RAQPPQEPEPPTRLRTPRPRAPSGQQQPSESEPPAGVPMKPGS) is disordered.

It is found in the parasitophorous vacuole membrane. In terms of biological role, during host cell infection by tachyzoites, does not play a role in tethering the parasitophorous vacuole to the host mitochondria. The protein is Mitochondrial association factor 1 form b0 of Toxoplasma gondii.